The primary structure comprises 130 residues: Small ribosomal subunit protein uS11 (130 aa).

It belongs to the universal ribosomal protein uS11 family. Part of the 30S ribosomal subunit. Interacts with proteins S7 and S18. Binds to IF-3.

In terms of biological role, located on the platform of the 30S subunit, it bridges several disparate RNA helices of the 16S rRNA. Forms part of the Shine-Dalgarno cleft in the 70S ribosome. The polypeptide is Small ribosomal subunit protein uS11 (Blochmanniella floridana).